A 487-amino-acid polypeptide reads, in one-letter code: 26S proteasome non-ATPase regulatory subunit 3 homolog B (487 aa).

The tract at residues Met-1 to Pro-21 is disordered. Over residues Asn-10 to Pro-21 the composition is skewed to polar residues. The PCI domain occupies Cys-239–Asp-420. The disordered stretch occupies residues Pro-452–Phe-487. Residues Thr-455–Ala-480 are compositionally biased toward basic and acidic residues.

It belongs to the proteasome subunit S3 family. In terms of assembly, component of the 19S regulatory particle (RP/PA700) lid subcomplex of the 26S proteasome. The 26S proteasome is composed of a core protease (CP), known as the 20S proteasome, capped at one or both ends by the 19S regulatory particle (RP/PA700). The RP/PA700 complex is composed of at least 17 different subunits in two subcomplexes, the base and the lid, which form the portions proximal and distal to the 20S proteolytic core, respectively. Interacts with UCH1 and UCH2. Preferentially expressed in flowers.

Acts as a regulatory subunit of the 26 proteasome which is involved in the ATP-dependent degradation of ubiquitinated proteins. The chain is 26S proteasome non-ATPase regulatory subunit 3 homolog B from Arabidopsis thaliana (Mouse-ear cress).